We begin with the raw amino-acid sequence, 836 residues long: Glutamate receptor ionotropic, kainate 1 (836 aa).

Positions 1 to 30 (MERGTVLIQPGLWTRDTSWTLLYFLCYILP) are cleaved as a signal peptide. Residues 31-561 (QTSPQVLRIG…VFSFLNPLSP (531 aa)) are Extracellular-facing. Residues asparagine 68, asparagine 74, asparagine 276, asparagine 379, asparagine 413, asparagine 424, and asparagine 431 are each glycosylated (N-linked (GlcNAc...) asparagine). 3 residues coordinate L-glutamate: proline 516, threonine 518, and arginine 523. N-linked (GlcNAc...) asparagine glycosylation occurs at asparagine 546. The chain crosses the membrane as a helical span at residues 562–582 (DIWMYVLLACLGVSCVLFVIA). Residues 583–638 (RFTPYEWYNPHPCNPDSDVVENNFTLLNSFWFGVGALMQQGSELMPKALSTRIVGG) lie on the Cytoplasmic side of the membrane. Residues 639-659 (IWWFFTLIIISSYTANLAAFL) form a helical membrane-spanning segment. Residues 660 to 721 (TVERMESPID…RQPSALGVEN (62 aa)) are Extracellular-facing. Residues serine 689 and threonine 690 each coordinate L-glutamate. A helical transmembrane segment spans residues 722 to 742 (IGGIFIVLAAGLVLSVFVAIG). Over 743–836 (EFIYKSRKNN…RRTQRKETVA (94 aa)) the chain is Cytoplasmic.

This sequence belongs to the glutamate-gated ion channel (TC 1.A.10.1) family. GRIK1 subfamily. As to quaternary structure, homotetramer or heterotetramer of pore-forming glutamate receptor subunits. Tetramers may be formed by the dimerization of dimers. Can form functional heteromeric receptors with GRIK4 and GRIK5. Interacts with KLHL17. As to expression, most abundant in the cerebellum. Also present in the suprachiasmatic nuclei of the hypothalamus.

Its subcellular location is the cell membrane. The protein resides in the postsynaptic cell membrane. The enzyme catalyses Ca(2+)(in) = Ca(2+)(out). Ionotropic glutamate receptor that functions as a cation-permeable ligand-gated ion channel, gated by L-glutamate and the glutamatergic agonist kainic acid. L-glutamate acts as an excitatory neurotransmitter at many synapses in the central nervous system. Binding of the excitatory neurotransmitter L-glutamate induces a conformation change, leading to the opening of the cation channel, and thereby converts the chemical signal to an electrical impulse. The receptor then desensitizes rapidly and enters a transient inactive state, characterized by the presence of bound agonist. The polypeptide is Glutamate receptor ionotropic, kainate 1 (Grik1) (Mus musculus (Mouse)).